The primary structure comprises 93 residues: Small ribosomal subunit protein uS19c (93 aa).

The interval 73–93 (EFSPTRTFRGHTKSDKKSRRP) is disordered. A compositionally biased stretch (basic residues) spans 80-93 (FRGHTKSDKKSRRP).

It belongs to the universal ribosomal protein uS19 family.

The protein localises to the plastid. The protein resides in the chloroplast. Functionally, protein S19 forms a complex with S13 that binds strongly to the 16S ribosomal RNA. This Mesostigma viride (Green alga) protein is Small ribosomal subunit protein uS19c (rps19).